The chain runs to 90 residues: DNA-directed RNA polymerase subunit Rpo11 (90 aa).

This sequence belongs to the archaeal Rpo11/eukaryotic RPB11/RPC19 RNA polymerase subunit family. In terms of assembly, part of the RNA polymerase complex.

Its subcellular location is the cytoplasm. It catalyses the reaction RNA(n) + a ribonucleoside 5'-triphosphate = RNA(n+1) + diphosphate. Functionally, DNA-dependent RNA polymerase (RNAP) catalyzes the transcription of DNA into RNA using the four ribonucleoside triphosphates as substrates. This chain is DNA-directed RNA polymerase subunit Rpo11, found in Metallosphaera sedula (strain ATCC 51363 / DSM 5348 / JCM 9185 / NBRC 15509 / TH2).